The chain runs to 357 residues: Homoserine kinase (357 aa).

It belongs to the GHMP kinase family. Homoserine kinase subfamily.

The catalysed reaction is L-homoserine + ATP = O-phospho-L-homoserine + ADP + H(+). The protein operates within amino-acid biosynthesis; L-threonine biosynthesis; L-threonine from L-aspartate: step 4/5. Its function is as follows. Commits homoserine to the threonine biosynthesis pathway by catalyzing its O-phosphorylation. This is Homoserine kinase from Cryptococcus neoformans var. grubii serotype A (strain H99 / ATCC 208821 / CBS 10515 / FGSC 9487) (Filobasidiella neoformans var. grubii).